Consider the following 432-residue polypeptide: tRNA(Ile)-lysidine synthase (432 aa).

An ATP-binding site is contributed by S20–S25.

The protein belongs to the tRNA(Ile)-lysidine synthase family.

The protein resides in the cytoplasm. It carries out the reaction cytidine(34) in tRNA(Ile2) + L-lysine + ATP = lysidine(34) in tRNA(Ile2) + AMP + diphosphate + H(+). Ligates lysine onto the cytidine present at position 34 of the AUA codon-specific tRNA(Ile) that contains the anticodon CAU, in an ATP-dependent manner. Cytidine is converted to lysidine, thus changing the amino acid specificity of the tRNA from methionine to isoleucine. In Shigella flexneri, this protein is tRNA(Ile)-lysidine synthase.